We begin with the raw amino-acid sequence, 273 residues long: Glucosamine-6-phosphate deaminase (273 aa).

Residue aspartate 72 is the Proton acceptor; for enolization step of the active site. Aspartate 141 acts as the For ring-opening step in catalysis. The Proton acceptor; for ring-opening step role is filled by histidine 143. Catalysis depends on glutamate 148, which acts as the For ring-opening step.

Belongs to the glucosamine/galactosamine-6-phosphate isomerase family. Homohexamer.

It localises to the cytoplasm. It catalyses the reaction alpha-D-glucosamine 6-phosphate + H2O = beta-D-fructose 6-phosphate + NH4(+). It functions in the pathway nucleotide-sugar biosynthesis; UDP-N-acetyl-alpha-D-glucosamine biosynthesis; alpha-D-glucosamine 6-phosphate from D-fructose 6-phosphate: step 1/1. Its function is as follows. Catalyzes the reversible conversion of alpha-D-glucosamine 6-phosphate (GlcN-6P) into beta-D-fructose 6-phosphate (Fru-6P) and ammonium ion, a regulatory reaction step in de novo uridine diphosphate-N-acetyl-alpha-D-glucosamine (UDP-GlcNAc) biosynthesis via hexosamine pathway. This chain is Glucosamine-6-phosphate deaminase, found in Drosophila melanogaster (Fruit fly).